A 129-amino-acid chain; its full sequence is Follitropin subunit beta (129 aa).

The first 18 residues, 1–18, serve as a signal peptide directing secretion; that stretch reads MKSIQFCFFFCCWKAICC. Disulfide bonds link Cys21–Cys69, Cys35–Cys84, Cys38–Cys122, Cys46–Cys100, Cys50–Cys102, and Cys105–Cys112. 2 N-linked (GlcNAc...) asparagine glycosylation sites follow: Asn25 and Asn42.

Belongs to the glycoprotein hormones subunit beta family. Heterodimer. The active follitropin is a heterodimer composed of an alpha chain/CGA shared with other hormones and a unique beta chain/FSHB shown here.

It localises to the secreted. Together with the alpha chain CGA constitutes follitropin, the follicle-stimulating hormone, and provides its biological specificity to the hormone heterodimer. Binds FSHR, a G protein-coupled receptor, on target cells to activate downstream signaling pathways. Follitropin is involved in follicle development and spermatogenesis in reproductive organs. This chain is Follitropin subunit beta (FSHB), found in Cavia porcellus (Guinea pig).